A 167-amino-acid chain; its full sequence is Large ribosomal subunit protein uL10 (167 aa).

The protein belongs to the universal ribosomal protein uL10 family. In terms of assembly, part of the ribosomal stalk of the 50S ribosomal subunit. The N-terminus interacts with L11 and the large rRNA to form the base of the stalk. The C-terminus forms an elongated spine to which L12 dimers bind in a sequential fashion forming a multimeric L10(L12)X complex.

Forms part of the ribosomal stalk, playing a central role in the interaction of the ribosome with GTP-bound translation factors. This chain is Large ribosomal subunit protein uL10, found in Latilactobacillus sakei subsp. sakei (strain 23K) (Lactobacillus sakei subsp. sakei).